The primary structure comprises 316 residues: Pantothenate kinase (316 aa).

ATP is bound at residue 95-102; it reads GSVAVGKS.

This sequence belongs to the prokaryotic pantothenate kinase family.

It is found in the cytoplasm. It carries out the reaction (R)-pantothenate + ATP = (R)-4'-phosphopantothenate + ADP + H(+). It participates in cofactor biosynthesis; coenzyme A biosynthesis; CoA from (R)-pantothenate: step 1/5. This Halalkalibacterium halodurans (strain ATCC BAA-125 / DSM 18197 / FERM 7344 / JCM 9153 / C-125) (Bacillus halodurans) protein is Pantothenate kinase (coaA).